Consider the following 273-residue polypeptide: N(omega)-hydroxy-L-arginine amidinohydrolase (273 aa).

Residues aspartate 109, histidine 111, aspartate 113, aspartate 198, and aspartate 200 each contribute to the Mn(2+) site.

This sequence belongs to the arginase family. Mn(2+) serves as cofactor.

It catalyses the reaction N(omega)-hydroxy-L-arginine + H2O = hydroxyurea + L-ornithine. In terms of biological role, involved in the biosynthesis of the antibiotic D-cycloserine (DCS), a cyclic structural analog of D-alanine, used as an antitubercular agent. Catalyzes the hydrolysis of N(omega)-hydroxy-L-arginine (NHA) to yield hydroxyurea (HU) and L-ornithine. This is N(omega)-hydroxy-L-arginine amidinohydrolase from Streptomyces lavendulae.